We begin with the raw amino-acid sequence, 296 residues long: tRNA dimethylallyltransferase (296 aa).

Position 2–9 (2–9 (GPTASGKT)) interacts with ATP. 4-9 (TASGKT) contributes to the substrate binding site. 3 interaction with substrate tRNA regions span residues 27 to 30 (DSAL), 151 to 155 (QRLAR), and 232 to 237 (RCVGYR).

It belongs to the IPP transferase family. As to quaternary structure, monomer. Mg(2+) serves as cofactor.

The enzyme catalyses adenosine(37) in tRNA + dimethylallyl diphosphate = N(6)-dimethylallyladenosine(37) in tRNA + diphosphate. Catalyzes the transfer of a dimethylallyl group onto the adenine at position 37 in tRNAs that read codons beginning with uridine, leading to the formation of N6-(dimethylallyl)adenosine (i(6)A). The chain is tRNA dimethylallyltransferase from Shewanella pealeana (strain ATCC 700345 / ANG-SQ1).